The primary structure comprises 347 residues: UPF0284 protein SSO2213 (347 aa).

This sequence belongs to the UPF0284 family.

This Saccharolobus solfataricus (strain ATCC 35092 / DSM 1617 / JCM 11322 / P2) (Sulfolobus solfataricus) protein is UPF0284 protein SSO2213.